Here is a 358-residue protein sequence, read N- to C-terminus: Metacaspase-3 (358 aa).

An important for catalytic activity region spans residues 1-84 (MGFDFGCLLK…APTHVSGTFR (84 aa)). Active-site residues include histidine 168 and cysteine 223.

The protein belongs to the peptidase C14B family. In epimastigotes, the unprocessed enzyme appears to be the main form. Auto-processing is dispensable for catalytic activity towards small oligopeptide substrates.

The protein resides in the cytoplasm. The protein localises to the nucleus. Its activity is regulated as follows. Activated by Ca(2+). Its function is as follows. Cysteine protease that cleaves specifically after arginine or lysine residues. In epimastigotes, may play a role in cell cycle G1/S transition. The protein is Metacaspase-3 of Trypanosoma cruzi (strain CL Brener).